A 461-amino-acid polypeptide reads, in one-letter code: Phosphoglucosamine mutase (461 aa).

Residue S107 is the Phosphoserine intermediate of the active site. S107, D254, D256, and D258 together coordinate Mg(2+). S107 carries the post-translational modification Phosphoserine.

This sequence belongs to the phosphohexose mutase family. The cofactor is Mg(2+). Activated by phosphorylation.

It carries out the reaction alpha-D-glucosamine 1-phosphate = D-glucosamine 6-phosphate. Functionally, catalyzes the conversion of glucosamine-6-phosphate to glucosamine-1-phosphate. The chain is Phosphoglucosamine mutase from Bifidobacterium longum (strain DJO10A).